The primary structure comprises 407 residues: Na(+)-translocating NADH-quinone reductase subunit F (407 aa).

The chain crosses the membrane as a helical span at residues 3–23 (IILGVVMFTLIVLALVLVILF). In terms of domain architecture, 2Fe-2S ferredoxin-type spans 32–126 (GDITISVNDD…DMDIELPEEI (95 aa)). The [2Fe-2S] cluster site is built by C69, C75, C78, and C110. The FAD-binding FR-type domain maps to 129-269 (VKKWECTVIS…SGPFGEFFAK (141 aa)). The catalytic stretch occupies residues 272–389 (DAEMVFVGGG…PMMNAAVIGM (118 aa)).

The protein belongs to the NqrF family. As to quaternary structure, composed of six subunits; NqrA, NqrB, NqrC, NqrD, NqrE and NqrF. Requires [2Fe-2S] cluster as cofactor. FAD serves as cofactor.

Its subcellular location is the cell inner membrane. The catalysed reaction is a ubiquinone + n Na(+)(in) + NADH + H(+) = a ubiquinol + n Na(+)(out) + NAD(+). In terms of biological role, NQR complex catalyzes the reduction of ubiquinone-1 to ubiquinol by two successive reactions, coupled with the transport of Na(+) ions from the cytoplasm to the periplasm. The first step is catalyzed by NqrF, which accepts electrons from NADH and reduces ubiquinone-1 to ubisemiquinone by a one-electron transfer pathway. The protein is Na(+)-translocating NADH-quinone reductase subunit F of Vibrio campbellii (strain ATCC BAA-1116).